The chain runs to 102 residues: Large ribosomal subunit protein uL24 (102 aa).

This sequence belongs to the universal ribosomal protein uL24 family. As to quaternary structure, part of the 50S ribosomal subunit.

One of two assembly initiator proteins, it binds directly to the 5'-end of the 23S rRNA, where it nucleates assembly of the 50S subunit. Functionally, one of the proteins that surrounds the polypeptide exit tunnel on the outside of the subunit. The chain is Large ribosomal subunit protein uL24 from Polynucleobacter asymbioticus (strain DSM 18221 / CIP 109841 / QLW-P1DMWA-1) (Polynucleobacter necessarius subsp. asymbioticus).